A 246-amino-acid chain; its full sequence is MIYSPTEQFEIKPLLTVNNMLTLSVNNYVMYVALVVTLMYSSVFLLNRTYLGFNRWGVALLAVYDTILNMVKSQMGARGGMYFPFMFTLFTFMLVANLVSMMPYSFAMSAQLVAIVSFSLSLWFGCVLMGLSKHGWGFFALFVPGGTPLALVPVLVLIETLSYSSRAISLGLRLSANVLSGHLLMLILGTLMFNLMGSSMLGFMGGFMPVMGVIAIVVTEFAIGMMQAYVFTILLSSYIKDSVYLH.

Positions 1–3 are cleaved as a propeptide — removed in mature form; it reads MIY. The next 7 membrane-spanning stretches (helical) occupy residues 25 to 45, 51 to 71, 79 to 99, 112 to 132, 138 to 158, 178 to 198, and 203 to 223; these read VNNY…SVFL, LGFN…LNMV, GGMY…ANLV, LVAI…MGLS, FFAL…LVLI, VLSG…LMGS, and FMGG…EFAI.

The protein belongs to the ATPase A chain family. In terms of assembly, F-type ATPases have 2 components, CF(1) - the catalytic core - and CF(0) - the membrane proton channel. CF(1) has five subunits: alpha(3), beta(3), gamma(1), delta(1), epsilon(1). CF(0) has three main subunits: a, b and c.

It localises to the mitochondrion inner membrane. In terms of biological role, mitochondrial membrane ATP synthase (F(1)F(0) ATP synthase or Complex V) produces ATP from ADP in the presence of a proton gradient across the membrane which is generated by electron transport complexes of the respiratory chain. F-type ATPases consist of two structural domains, F(1) - containing the extramembraneous catalytic core and F(0) - containing the membrane proton channel, linked together by a central stalk and a peripheral stalk. During catalysis, ATP synthesis in the catalytic domain of F(1) is coupled via a rotary mechanism of the central stalk subunits to proton translocation. Key component of the proton channel; it may play a direct role in the translocation of protons across the membrane. In Debaryomyces hansenii (strain ATCC 36239 / CBS 767 / BCRC 21394 / JCM 1990 / NBRC 0083 / IGC 2968) (Yeast), this protein is ATP synthase subunit a (ATP6).